A 438-amino-acid polypeptide reads, in one-letter code: Putative F-box protein At5g15660 (438 aa).

The interval 1-24 (MRRRSKKIKTENNSNPETSEERNK) is disordered. One can recognise an F-box domain in the interval 22 to 68 (RNKFDEIPHDLVIEILERLPLKSVARFLTVSKLWATTIRSPDFRKSY).

The sequence is that of Putative F-box protein At5g15660 from Arabidopsis thaliana (Mouse-ear cress).